Consider the following 331-residue polypeptide: LIM/homeobox protein Lhx9 (331 aa).

LIM zinc-binding domains follow at residues 71-132 (TLCA…FSVK) and 133-194 (RCAR…LVQG). A disordered region spans residues 253-275 (ETDLDRDQTYPPSQKTKRMRTSF). Positions 268 to 327 (TKRMRTSFKHHQLRTMKSYFAINHNPDAKDLKQLAQKTGLTKRVLQGEQCSGFNSHTTRR) form a DNA-binding region, homeobox.

The protein localises to the nucleus. Its function is as follows. May be involved in gonadal development. This is LIM/homeobox protein Lhx9 (lhx9) from Xenopus laevis (African clawed frog).